Here is a 108-residue protein sequence, read N- to C-terminus: Pyrimidine/purine nucleoside phosphorylase (108 aa).

It belongs to the nucleoside phosphorylase PpnP family.

It catalyses the reaction a purine D-ribonucleoside + phosphate = a purine nucleobase + alpha-D-ribose 1-phosphate. It carries out the reaction adenosine + phosphate = alpha-D-ribose 1-phosphate + adenine. The catalysed reaction is cytidine + phosphate = cytosine + alpha-D-ribose 1-phosphate. The enzyme catalyses guanosine + phosphate = alpha-D-ribose 1-phosphate + guanine. It catalyses the reaction inosine + phosphate = alpha-D-ribose 1-phosphate + hypoxanthine. It carries out the reaction thymidine + phosphate = 2-deoxy-alpha-D-ribose 1-phosphate + thymine. The catalysed reaction is uridine + phosphate = alpha-D-ribose 1-phosphate + uracil. The enzyme catalyses xanthosine + phosphate = alpha-D-ribose 1-phosphate + xanthine. Catalyzes the phosphorolysis of diverse nucleosides, yielding D-ribose 1-phosphate and the respective free bases. Can use uridine, adenosine, guanosine, cytidine, thymidine, inosine and xanthosine as substrates. Also catalyzes the reverse reactions. The protein is Pyrimidine/purine nucleoside phosphorylase of Acinetobacter baumannii (strain AB307-0294).